Here is a 274-residue protein sequence, read N- to C-terminus: Formamidopyrimidine-DNA glycosylase (274 aa).

Residue proline 2 is the Schiff-base intermediate with DNA of the active site. Glutamate 3 acts as the Proton donor in catalysis. The active-site Proton donor; for beta-elimination activity is lysine 58. Residues histidine 91 and arginine 110 each coordinate DNA. An FPG-type zinc finger spans residues 238–272; that stretch reads QVYDKTGQECVRCGTIIEKIQLGGRGTHFCPNCQR. Residue arginine 262 is the Proton donor; for delta-elimination activity of the active site.

Belongs to the FPG family. As to quaternary structure, monomer. It depends on Zn(2+) as a cofactor.

The enzyme catalyses Hydrolysis of DNA containing ring-opened 7-methylguanine residues, releasing 2,6-diamino-4-hydroxy-5-(N-methyl)formamidopyrimidine.. It carries out the reaction 2'-deoxyribonucleotide-(2'-deoxyribose 5'-phosphate)-2'-deoxyribonucleotide-DNA = a 3'-end 2'-deoxyribonucleotide-(2,3-dehydro-2,3-deoxyribose 5'-phosphate)-DNA + a 5'-end 5'-phospho-2'-deoxyribonucleoside-DNA + H(+). Involved in base excision repair of DNA damaged by oxidation or by mutagenic agents. Acts as a DNA glycosylase that recognizes and removes damaged bases. Has a preference for oxidized purines, such as 7,8-dihydro-8-oxoguanine (8-oxoG). Has AP (apurinic/apyrimidinic) lyase activity and introduces nicks in the DNA strand. Cleaves the DNA backbone by beta-delta elimination to generate a single-strand break at the site of the removed base with both 3'- and 5'-phosphates. The protein is Formamidopyrimidine-DNA glycosylase of Streptococcus pneumoniae (strain ATCC BAA-255 / R6).